Consider the following 98-residue polypeptide: (4S)-4-hydroxy-5-phosphonooxypentane-2,3-dione isomerase (98 aa).

The 90-residue stretch at 2-91 folds into the ABM domain; sequence NVTLVEINIK…MSQPRQKRSF (90 aa).

It belongs to the LsrG family. Homodimer.

The protein resides in the cytoplasm. The enzyme catalyses (2S)-2-hydroxy-3,4-dioxopentyl phosphate = 3-hydroxy-2,4-dioxopentyl phosphate. Involved in the degradation of phospho-AI-2, thereby terminating induction of the lsr operon and closing the AI-2 signaling cycle. Catalyzes the conversion of (4S)-4-hydroxy-5-phosphonooxypentane-2,3-dione (P-DPD) to 3-hydroxy-5-phosphonooxypentane-2,4-dione (P-HPD). The chain is (4S)-4-hydroxy-5-phosphonooxypentane-2,3-dione isomerase from Klebsiella pneumoniae subsp. pneumoniae (strain ATCC 700721 / MGH 78578).